Reading from the N-terminus, the 620-residue chain is Mitochondrial Rho GTPase 2 (620 aa).

Topologically, residues 1–594 (MKRDVRILLL…ELHTTSFWLR (594 aa)) are cytoplasmic. Positions 2-168 (KRDVRILLLG…FYYAQKAVLH (167 aa)) constitute a Miro 1 domain. The GTP site is built by G16, K17, T18, and S19. Residue T18 participates in Mg(2+) binding. The Mg(2+) site is built by P35 and D57. Residue S59 coordinates GTP. A Glycyl lysine isopeptide (Lys-Gly) (interchain with G-Cter in ubiquitin) cross-link involves residue K96. 5 residues coordinate GTP: N118, K119, D121, A149, and K150. K119 is covalently cross-linked (Glycyl lysine isopeptide (Lys-Gly) (interchain with G-Cter in ubiquitin)). Residue K164 forms a Glycyl lysine isopeptide (Lys-Gly) (interchain with G-Cter in ubiquitin) linkage. EF-hand domains are found at residues 184 to 219 (ACAQ…CFGH) and 304 to 339 (HGYQ…FPGP). Ca(2+)-binding residues include D197, D199, D201, E208, D317, D319, D321, and E328. Residues 340–364 (PWGPQLPRHRPHRGRSAAPARVPLP) form a disordered region. The Miro 2 domain maps to 415–578 (RNVLLCKVLG…FARLATMATF (164 aa)). Residues G427, G429, K430, and S431 each coordinate GTP. Mg(2+)-binding residues include S431 and E473. Residues K527, D529, and C558 each contribute to the GTP site. A helical; Anchor for type IV membrane protein transmembrane segment spans residues 595–617 (VALGAVGAAVAAILSFSLYRVLV). Over 618 to 620 (KSR) the chain is Mitochondrial intermembrane.

This sequence belongs to the mitochondrial Rho GTPase family. Homodimer. Interacts with the kinesin-binding proteins TRAK1/OIP106 and TRAK2/GRIF1, forming a link between mitochondria and the trafficking apparatus of the microtubules. Interacts with ARMCX3. Found in a complex with KIF5B, OGT, RHOT1 and TRAK1. Ubiquitinated by PRKN in a PINK1-dependent manner, leading to its degradation.

It is found in the mitochondrion outer membrane. The catalysed reaction is GTP + H2O = GDP + phosphate + H(+). It carries out the reaction ATP + H2O = ADP + phosphate + H(+). It catalyses the reaction UTP + H2O = UDP + phosphate + H(+). In terms of biological role, atypical mitochondrial nucleoside-triphosphatase (NTPase) involved in mitochondrial trafficking. Probably involved in control of anterograde transport of mitochondria and their subcellular distribution. Can hydrolyze GTP, ATP and UTP. In Sus scrofa (Pig), this protein is Mitochondrial Rho GTPase 2 (RHOT2).